The chain runs to 423 residues: Glycine amidinotransferase, mitochondrial (423 aa).

The transit peptide at Met-1–Thr-43 directs the protein to the mitochondrion. Phosphoserine occurs at positions 46 and 49. Residue Asp-170 coordinates arginine. Residues Asp-254 and His-303 contribute to the active site. Asp-305, Arg-322, Ser-354, and Ser-355 together coordinate arginine. N6-acetyllysine is present on Lys-385. Catalysis depends on Cys-407, which acts as the Amidino-cysteine intermediate.

The protein belongs to the amidinotransferase family. Homodimer. In terms of tissue distribution, highly expressed in the kidney and pancreas, especially in the proximal tubules of the kidney, and alpha cells of the pancreatic islets (at protein level). Moderately expressed in liver hepatocytes (at protein level). Expressed in the kidney, pancreas, liver, colon, ileum, jejunum, heart and skeletal muscle. In reproductive tissues, expressed in the testis, epididymis, ovary, oviduct and uterus. Expressed throughout the brain in neurons, astrocytes and oligodendrocytes. In 12.5 dpc embryos, it is expressed in the middle part of the somites, hepatic primordium and wall of the dorsal aorta. Expressed in 15.5 dpc embryos in isolated cells throughout the central nervous system, skeletal muscles, gonad primordia, caudal somites, liver and pancreas, but not in the choroid plexus, root ganglia or kidney. Expressed in skeletal muscle, kidney, pancreas, central nervous system, liver and intestine epithelial cells, but not in epidermis, dermis, olfactory epithelium, trachea, lung, stomach or heart in 18.5 dpc embryos.

It localises to the mitochondrion inner membrane. It catalyses the reaction L-arginine + glycine = guanidinoacetate + L-ornithine. It carries out the reaction 4-aminobutanoate + L-arginine = 4-guanidinobutanoate + L-ornithine. The enzyme catalyses beta-alanine + L-arginine = 3-guanidinopropanoate + L-ornithine. The catalysed reaction is taurine + L-arginine = taurocyamine + L-ornithine. Its pathway is amine and polyamine biosynthesis; creatine biosynthesis; creatine from L-arginine and glycine: step 1/2. Transamidinase that catalyzes the transfer of the amidino group of L-arginine onto the amino moiety of acceptor metabolites such as glycine, beta-alanine, gamma-aminobutyric acid (GABA) and taurine yielding the corresponding guanidine derivatives. Catalyzes the rate-limiting step of creatine biosynthesis, namely the transfer of the amidino group from L-arginine to glycine to generate guanidinoacetate, which is then methylated by GAMT to form creatine. Provides creatine as a source for ATP generation in tissues with high energy demands, in particular skeletal muscle, heart and brain. The chain is Glycine amidinotransferase, mitochondrial (Gatm) from Rattus norvegicus (Rat).